The sequence spans 420 residues: D-inositol 3-phosphate glycosyltransferase (420 aa).

A 1D-myo-inositol 3-phosphate-binding site is contributed by histidine 13. UDP-N-acetyl-alpha-D-glucosamine contacts are provided by residues glutamine 19–proline 20 and glycine 27. Residues aspartate 24–asparagine 29, lysine 82, tyrosine 115, threonine 139, and arginine 159 contribute to the 1D-myo-inositol 3-phosphate site. The UDP-N-acetyl-alpha-D-glucosamine site is built by arginine 233, lysine 238, and valine 294. Mg(2+) is bound by residues phenylalanine 303, arginine 304, and alanine 306. Residues glutamate 316 and glutamate 324 each coordinate UDP-N-acetyl-alpha-D-glucosamine. Threonine 330 provides a ligand contact to Mg(2+).

The protein belongs to the glycosyltransferase group 1 family. MshA subfamily. As to quaternary structure, homodimer.

The catalysed reaction is 1D-myo-inositol 3-phosphate + UDP-N-acetyl-alpha-D-glucosamine = 1D-myo-inositol 2-acetamido-2-deoxy-alpha-D-glucopyranoside 3-phosphate + UDP + H(+). In terms of biological role, catalyzes the transfer of a N-acetyl-glucosamine moiety to 1D-myo-inositol 3-phosphate to produce 1D-myo-inositol 2-acetamido-2-deoxy-glucopyranoside 3-phosphate in the mycothiol biosynthesis pathway. In Pseudarthrobacter chlorophenolicus (strain ATCC 700700 / DSM 12829 / CIP 107037 / JCM 12360 / KCTC 9906 / NCIMB 13794 / A6) (Arthrobacter chlorophenolicus), this protein is D-inositol 3-phosphate glycosyltransferase.